The primary structure comprises 1188 residues: Meiotically up-regulated gene 190 protein (1188 aa).

Over residues 1–11 (MSTHSGDSTKQ) the composition is skewed to polar residues. Disordered regions lie at residues 1–61 (MSTH…DPIT) and 83–125 (FTVP…EADN). The span at 41–61 (EKKEEQQREQTENEKLFDPIT) shows a compositional bias: basic and acidic residues. Positions 84 to 112 (TVPNQSIQGSSLPSEKPYLSSNQPTNVYK) are enriched in polar residues. The helical transmembrane segment at 173–193 (LVISWFFTHSIIISAVLPLAI) threads the bilayer. An SMP-LTD domain is found at 228-453 (IPESAEWMNH…SPKSMTIDLS (226 aa)). Positions 298–318 (ASESFSEKQASEAEHKDEPEQ) are disordered. Residues 302-318 (FSEKQASEAEHKDEPEQ) show a composition bias toward basic and acidic residues. C2 domains are found at residues 451-576 (DLSK…ERCD) and 636-781 (KEEE…TKWY). The Ca(2+) site is built by aspartate 485, aspartate 491, aspartate 544, aspartate 546, serine 549, and aspartate 552. 2 disordered regions span residues 615–639 (TIPR…KEEE) and 1002–1066 (QRAS…GTMN). Serine 1005 carries the post-translational modification Phosphoserine. The span at 1022–1032 (DDSVDTEDEET) shows a compositional bias: acidic residues.

It depends on Ca(2+) as a cofactor.

Its subcellular location is the cytoplasm. The protein resides in the endoplasmic reticulum membrane. It localises to the nucleus membrane. It is found in the cytoskeleton. The protein localises to the microtubule organizing center. Its subcellular location is the spindle pole body. Functionally, has a role in meiosis. The sequence is that of Meiotically up-regulated gene 190 protein (mug190) from Schizosaccharomyces pombe (strain 972 / ATCC 24843) (Fission yeast).